Reading from the N-terminus, the 488-residue chain is Inosine-5'-monophosphate dehydrogenase (488 aa).

2 consecutive CBS domains span residues 94–150 (IVSE…SKTV) and 154–215 (MTKK…CKDE). NAD(+)-binding positions include Asp249, 249 to 251 (DSS), and 299 to 301 (GIG). K(+) is bound by residues Gly301 and Gly303. Ser304 is a binding site for IMP. Cys306 provides a ligand contact to K(+). The active-site Thioimidate intermediate is Cys306. IMP is bound by residues 339–341 (DGG), 362–363 (GS), and 386–390 (YRGMG). Arg402 acts as the Proton acceptor in catalysis. Residue Glu416 coordinates IMP. Glu470, Ser471, and His472 together coordinate K(+).

Belongs to the IMPDH/GMPR family. In terms of assembly, homotetramer. K(+) serves as cofactor.

It carries out the reaction IMP + NAD(+) + H2O = XMP + NADH + H(+). Its pathway is purine metabolism; XMP biosynthesis via de novo pathway; XMP from IMP: step 1/1. Its activity is regulated as follows. Mycophenolic acid (MPA) is a non-competitive inhibitor that prevents formation of the closed enzyme conformation by binding to the same site as the amobile flap. In contrast, mizoribine monophosphate (MZP) is a competitive inhibitor that induces the closed conformation. MPA is a potent inhibitor of mammalian IMPDHs but a poor inhibitor of the bacterial enzymes. MZP is a more potent inhibitor of bacterial IMPDH. Catalyzes the conversion of inosine 5'-phosphate (IMP) to xanthosine 5'-phosphate (XMP), the first committed and rate-limiting step in the de novo synthesis of guanine nucleotides, and therefore plays an important role in the regulation of cell growth. This chain is Inosine-5'-monophosphate dehydrogenase, found in Haemophilus influenzae (strain ATCC 51907 / DSM 11121 / KW20 / Rd).